The chain runs to 82 residues: uncharacterized protein (82 aa).

Residues 1 to 19 (MKNLLKILLIIAFANPVFA) form the signal peptide.

This is an uncharacterized protein from Rickettsia prowazekii (strain Madrid E).